A 336-amino-acid polypeptide reads, in one-letter code: Terephthalate 1,2-dioxygenase, reductase component 1 (336 aa).

A 2Fe-2S ferredoxin-type domain is found at 3–91 (HQIHIHDSDI…DIRIQPSSFR (89 aa)). Positions 37, 42, 45, and 75 each coordinate [2Fe-2S] cluster. The FAD-binding FR-type domain occupies 98–197 (RKRFTAKVYS…ELPFGSIALK (100 aa)).

In terms of assembly, monomer. Part of a multicomponent enzyme system composed of a reductase (TphA1I or TphA1II) and a two-subunit oxygenase component (TphA2I or TphA2II and TphA3I or TphA3II). FAD serves as cofactor. The cofactor is [2Fe-2S] cluster.

It catalyses the reaction terephthalate + NADH + O2 + H(+) = (3S,4R)-3,4-dihydroxycyclohexa-1,5-diene-1,4-dicarboxylate + NAD(+). Functionally, component of the terephthalate 1,2-dioxygenase multicomponent enzyme system which catalyzes the dioxygenation of terephthalate (TER/TPA) to 1,2-dihydroxy-3,5-cyclohexadiene-1,4-dicarboxylic acid (DCD). TphA1 probably reduces TphA2A3. It can also use 2,5-dicarboxypyridine (PDC) and 1,4-napthalenedicarboxylic acid (NDC) as substrates, and preferentially uses NADPH which is the physiological electron donor. This Comamonas sp protein is Terephthalate 1,2-dioxygenase, reductase component 1 (tphA1I).